The primary structure comprises 875 residues: Probable serine/threonine-protein kinase samkC (875 aa).

Residues 1–12 show a composition bias toward polar residues; the sequence is METTTITSILDD. A disordered region spans residues 1–47; that stretch reads METTTITSILDDNNNNNNNNNNNNNNNNNNNNNNNNNNNNNNNNNYN. Over residues 13–45 the composition is skewed to low complexity; the sequence is NNNNNNNNNNNNNNNNNNNNNNNNNNNNNNNNN. The SAM domain occupies 51–116; it reads WDNEMVCKWL…SEFDDLKNIF (66 aa). A coiled-coil region spans residues 135-162; the sequence is DNNNLNNLNNNNNNNNNNNNNNNNNNNN. The segment covering 136–168 has biased composition (low complexity); that stretch reads NNNLNNLNNNNNNNNNNNNNNNNNNNNNNNNNN. The segment at 136 to 170 is disordered; sequence NNNLNNLNNNNNNNNNNNNNNNNNNNNNNNNNNKT. One can recognise a Protein kinase domain in the interval 181-452; the sequence is YVFIKQMKGS…SKQLLNFSWF (272 aa). Residues 187–195 and K210 contribute to the ATP site; that span reads MKGSVNCSL. Catalysis depends on D301, which acts as the Proton acceptor. 2 disordered regions span residues 331 to 362 and 461 to 718; these read NNND…NDTN and SEPQ…NNNN. The segment covering 474–554 has biased composition (low complexity); it reads PQTSQSKPKP…KPKPSSSLSS (81 aa). The segment covering 555–564 has biased composition (pro residues); the sequence is EPPPLEPQPK. Composition is skewed to low complexity over residues 565–581, 589–611, and 617–653; these read PQTS…LSSS, QPTQ…SQPT, and QPKS…QQQK. The stretch at 626–655 forms a coiled coil; it reads QSKQQQQQQQQQQQQQQQQQQQQQQQQKSK. Residues 654–663 are compositionally biased toward basic and acidic residues; sequence SKPEQSKSKP. Positions 664–718 are enriched in low complexity; the sequence is EQSQSKPQPGQPLQSPSKPQPIPSTTKTTTTTTTTTTPNNNNNNNNNNNNNNNNN. The helical transmembrane segment at 842–862 threads the bilayer; the sequence is TLILYTFYYFLSNTLIYQIIL.

It belongs to the protein kinase superfamily. Ser/Thr protein kinase family.

It is found in the membrane. It catalyses the reaction L-seryl-[protein] + ATP = O-phospho-L-seryl-[protein] + ADP + H(+). It carries out the reaction L-threonyl-[protein] + ATP = O-phospho-L-threonyl-[protein] + ADP + H(+). In Dictyostelium discoideum (Social amoeba), this protein is Probable serine/threonine-protein kinase samkC (samkC).